A 475-amino-acid chain; its full sequence is tRNA-2-methylthio-N(6)-dimethylallyladenosine synthase (475 aa).

The 118-residue stretch at A2–G119 folds into the MTTase N-terminal domain. C11, C48, C82, C156, C160, and C163 together coordinate [4Fe-4S] cluster. The Radical SAM core domain maps to R142–Q374. A TRAM domain is found at R377 to R440.

It belongs to the methylthiotransferase family. MiaB subfamily. In terms of assembly, monomer. Requires [4Fe-4S] cluster as cofactor.

It localises to the cytoplasm. It catalyses the reaction N(6)-dimethylallyladenosine(37) in tRNA + (sulfur carrier)-SH + AH2 + 2 S-adenosyl-L-methionine = 2-methylsulfanyl-N(6)-dimethylallyladenosine(37) in tRNA + (sulfur carrier)-H + 5'-deoxyadenosine + L-methionine + A + S-adenosyl-L-homocysteine + 2 H(+). In terms of biological role, catalyzes the methylthiolation of N6-(dimethylallyl)adenosine (i(6)A), leading to the formation of 2-methylthio-N6-(dimethylallyl)adenosine (ms(2)i(6)A) at position 37 in tRNAs that read codons beginning with uridine. The protein is tRNA-2-methylthio-N(6)-dimethylallyladenosine synthase of Actinobacillus pleuropneumoniae serotype 5b (strain L20).